The following is a 441-amino-acid chain: Cysteine proteinase (441 aa).

Cysteines 249 and 290 form a disulfide. The active site involves C252. Residues N270 and N345 are each glycosylated (N-linked (GlcNAc...) asparagine). Residues H381 and N403 contribute to the active site.

The protein belongs to the peptidase C1 family.

This Theileria annulata protein is Cysteine proteinase (TACP).